Here is a 163-residue protein sequence, read N- to C-terminus: Peptidyl-prolyl cis-trans isomerase (163 aa).

Residues 17–163 (KTAYATIKTN…IESVVFSSSL (147 aa)) enclose the PPIase cyclophilin-type domain.

The protein belongs to the cyclophilin-type PPIase family.

The enzyme catalyses [protein]-peptidylproline (omega=180) = [protein]-peptidylproline (omega=0). Its function is as follows. PPIases accelerate the folding of proteins. It catalyzes the cis-trans isomerization of proline imidic peptide bonds in oligopeptides. In Helicobacter pylori (strain ATCC 700392 / 26695) (Campylobacter pylori), this protein is Peptidyl-prolyl cis-trans isomerase (ppiA).